The primary structure comprises 168 residues: Photosystem I assembly protein Ycf3 (168 aa).

3 TPR repeats span residues 35–68 (AFTY…EIDP), 72–105 (SYIL…NPFL), and 120–153 (GEQA…TPGN).

The protein belongs to the Ycf3 family.

It localises to the plastid. The protein localises to the chloroplast thylakoid membrane. Its function is as follows. Essential for the assembly of the photosystem I (PSI) complex. May act as a chaperone-like factor to guide the assembly of the PSI subunits. This chain is Photosystem I assembly protein Ycf3, found in Lemna minor (Common duckweed).